The primary structure comprises 260 residues: POLG alternative reading frame (260 aa).

Disordered stretches follow at residues 1–50 (MEPK…LRPR) and 108–219 (ARRG…RRGG). 3 stretches are compositionally biased toward low complexity: residues 36–48 (AGSS…LQLR), 116–154 (GRGA…GQPG), and 164–186 (AEPA…EAPG). The segment at 104-130 (ANLRARRGDAWRGRGAPQRRAPAEARA) is required for nucleolar localization. 2 stretches are compositionally biased toward gly residues: residues 187-199 (LGLG…VRPR) and 209-219 (RGAGPGVRRGG).

In terms of assembly, interacts with C1QBP; the interaction results in nucleolar localization of C1QBP, probably due to prevention of C1QBP maturation and redirection from mitochondria to nucleoli. In terms of processing, undergoes proteolytic cleavage to produce a secreted C-terminal fragment.

Its subcellular location is the nucleus. It is found in the nucleolus. The protein localises to the secreted. This is POLG alternative reading frame from Homo sapiens (Human).